The primary structure comprises 68 residues: Antimicrobial peptide Eval418 (68 aa).

Residues 1 to 23 (MRTQLAVLLVALVLLQMIAQSEA) form the signal peptide. Position 36 is an isoleucine amide (I36). A propeptide spanning residues 37–68 (GKRGLRNLDDLDDVFDDDLSAADLEFLKQLMR) is cleaved from the precursor.

This sequence belongs to the non-disulfide-bridged peptide (NDBP) superfamily. Short antimicrobial peptide (group 4) family. In terms of tissue distribution, expressed by the venom gland.

Its subcellular location is the secreted. Its function is as follows. Probable antimicrobial peptide. Shows dose-dependent and time-dependent inactivation of herpes simplex virus type 1 (HSV-1) and dose-dependent inhibition of HSV-1 viral attachment to host cells. Scarcely suppress an established HSV-1 infection due to poor cellular uptake. The protein is Antimicrobial peptide Eval418 of Euscorpiops validus (Scorpion).